A 271-amino-acid chain; its full sequence is Glutamate racemase (271 aa).

Substrate contacts are provided by residues 13–14 (DS) and 45–46 (YG). Catalysis depends on C77, which acts as the Proton donor/acceptor. 78–79 (NT) is a binding site for substrate. C192 serves as the catalytic Proton donor/acceptor. 193-194 (TH) is a binding site for substrate.

Belongs to the aspartate/glutamate racemases family.

The enzyme catalyses L-glutamate = D-glutamate. The protein operates within cell wall biogenesis; peptidoglycan biosynthesis. Provides the (R)-glutamate required for cell wall biosynthesis. The protein is Glutamate racemase of Sinorhizobium medicae (strain WSM419) (Ensifer medicae).